Consider the following 395-residue polypeptide: Calreticulin (395 aa).

The signal sequence occupies residues 1 to 15; sequence MKSLCLLAIVAVVSA. A disulfide bond links Cys-101 and Cys-133. An alpha-D-glucoside is bound by residues Tyr-105, Lys-107, Tyr-124, and Asp-131. 7 repeat units span residues 186-197, 205-216, 222-233, 239-250, 254-264, 268-278, and 282-292. Residues 186–250 are 4 X approximate repeats; that stretch reads AQTGSLEEDW…DAKKPEDWDD (65 aa). Positions 193–301 are P-domain; the sequence is EDWDLLPAKK…PEYTPDDELY (109 aa). The span at 202 to 212 shows a compositional bias: basic and acidic residues; it reads KIKDPDAKKPE. A disordered region spans residues 202 to 255; it reads KIKDPDAKKPEDWDEREYIDDAEDAKPEDWEKPEHIPDPDAKKPEDWDDEMDGE. Residues 213 to 224 show a composition bias toward acidic residues; that stretch reads DWDEREYIDDAE. Residues 225–246 show a composition bias toward basic and acidic residues; sequence DAKPEDWEKPEHIPDPDAKKPE. Residues 254-292 form a 3 X approximate repeats region; it reads GEWEPPMIDNPEYKGEWKPKQIKNPAYKGKWIHPEIENP. A C-domain region spans residues 302 to 395; it reads SYESWGAIGF…KEEEEGHDEL (94 aa). Asp-312 lines the an alpha-D-glucoside pocket. Positions 340 to 380 are enriched in basic and acidic residues; sequence ETFDKLKTVEKEKKEKADEETRKAEEEARKKAEEEKEAKKD. Residues 340 to 395 form a disordered region; it reads ETFDKLKTVEKEKKEKADEETRKAEEEARKKAEEEKEAKKDDDEEEKEEEEGHDEL. The segment covering 381–395 has biased composition (acidic residues); it reads DDEEEKEEEEGHDEL. The Prevents secretion from ER motif lies at 392–395; sequence HDEL.

This sequence belongs to the calreticulin family. In terms of processing, cleaved by caspase ced-3 in vitro.

The protein localises to the endoplasmic reticulum lumen. Its function is as follows. Molecular calcium-binding chaperone promoting folding, oligomeric assembly and quality control in the endoplasmic reticulum (ER) via the calreticulin/calnexin cycle. This lectin may interact transiently with almost all of the monoglucosylated glycoproteins that are synthesized in the ER. Probably by controlling the folding of extracellular matrix protein unc-52/Perlecan, may play a role in the formation of fibrous organelles, a hemidesmosome-like structure attaching muscles to the epidermis. Protects dopaminergic neurons against oxidative stress-induced neurodegeneration. May play a role in protection against ER stress. Plays a role in modulating lifespan, acting by influencing ER calcium homeostasis. This chain is Calreticulin (crt-1), found in Caenorhabditis elegans.